Consider the following 1245-residue polypeptide: Prospore membrane adapter protein SPO71 (1245 aa).

Positions 207-270 (LHEEDQENTN…DFNYNREPSE (64 aa)) are disordered. Over residues 227-247 (KRKDLGESKSISRKDYSHFDR) the composition is skewed to basic and acidic residues. A PxP motif is present at residues 385–399 (INILPPWPTELTEEE). Residues 1030 to 1229 (LIQKGPLYQK…WVMSIYYELE (200 aa)) enclose the PH domain. Residues 1154-1192 (KKGNEKQYTQDYGRQDNNIDPPSAPEADLNNSNVPSNTD) are disordered. Polar residues-rich tracts occupy residues 1159 to 1173 (KQYT…NNID) and 1182 to 1191 (LNNSNVPSNT).

Belongs to the SPO71 family. As to quaternary structure, interacts (via PxP motif) with VPS13 (via SHR-BD domain); during prospore membrane formation.

It localises to the prospore membrane. Functionally, recruits the lipid transfer protein VPS13 to the prospore membrane during sporulation, thereby aiding prospore membrane formation. The sequence is that of Prospore membrane adapter protein SPO71 (SPO71) from Saccharomyces cerevisiae (strain ATCC 204508 / S288c) (Baker's yeast).